Here is a 118-residue protein sequence, read N- to C-terminus: Large ribosomal subunit protein bL20 (118 aa).

The protein belongs to the bacterial ribosomal protein bL20 family.

Its function is as follows. Binds directly to 23S ribosomal RNA and is necessary for the in vitro assembly process of the 50S ribosomal subunit. It is not involved in the protein synthesizing functions of that subunit. This chain is Large ribosomal subunit protein bL20, found in Staphylococcus saprophyticus subsp. saprophyticus (strain ATCC 15305 / DSM 20229 / NCIMB 8711 / NCTC 7292 / S-41).